Reading from the N-terminus, the 400-residue chain is MNEDPAQQAMKVLAKYPLCDRCLGRLFAGLGRGLSNAERGRALKLSVVMSLHAMSLSGRLPENARDVLANAGGAAAQVYVELFGSPPEHRSCYICNDALDKFLDEMPQRVADAVKEWGGSTFLVGAKVDPGVIAREERIKAEFGLAFGESIKSEIKRELGKRAQQLGPKVSFDRPDVVVMVSFPDGSVSVQPRRLVVKGLYRRLRRDLQLRPREALSHPLVARLINDTRSSRVGIVGLVRDEKEVRALGLGIPVEFHLGGPRVRLVPPDGSIIEAEGASLEVNSSVEASGPEDLSRRVRVYRCVLYVEGGAFESLQLAAASLRGKEVRQKFMGKEVSGVVRGAECVDMGGGLAECIIALDERLHVMELVSGSGTEPSLSGLLGTAAECVVADLLGVIPLR.

Residues 77–194 form the THUMP domain; that stretch reads QVYVELFGSP…DGSVSVQPRR (118 aa). Y301 is a binding site for substrate.

Belongs to the pseudouridine synthase Pus10 family.

The catalysed reaction is uridine(54) in tRNA = pseudouridine(54) in tRNA. It catalyses the reaction uridine(55) in tRNA = pseudouridine(55) in tRNA. Responsible for synthesis of pseudouridine from uracil-54 and uracil-55 in the psi GC loop of transfer RNAs. This Acidilobus saccharovorans (strain DSM 16705 / JCM 18335 / VKM B-2471 / 345-15) protein is tRNA pseudouridine synthase Pus10.